Consider the following 501-residue polypeptide: Beta-glucosidase 25 (501 aa).

The first 19 residues, 1–19, serve as a signal peptide directing secretion; sequence MSLLTLVHILVSFSACVEA. Q39 lines the a beta-D-glucoside pocket. An N-linked (GlcNAc...) asparagine glycan is attached at N107. Residues H140 and 185–186 each bind a beta-D-glucoside; that span reads NE. The active-site Proton donor is the E186. C205 and C213 are joined by a disulfide. A beta-D-glucoside contacts are provided by residues Y329, E402, W452, 459 to 460, and F468; that span reads EW. Residue E402 is the Nucleophile of the active site. An N-linked (GlcNAc...) asparagine glycan is attached at N478.

This sequence belongs to the glycosyl hydrolase 1 family.

The catalysed reaction is Hydrolysis of terminal, non-reducing beta-D-glucosyl residues with release of beta-D-glucose.. The polypeptide is Beta-glucosidase 25 (BGLU25) (Oryza sativa subsp. japonica (Rice)).